The following is a 1387-amino-acid chain: MEDLMTSYSFTEKKRIRKDFGKQRSILEVPFLLAIQVDSYREFLQEDVEPNKRKDLGLHAALKSVFPISSYSGNAALEYVGYKLGEPVFDERECRQRGMSYGAPLRVTVRLVIYDRESSTKAIKYVKEQEVYLGEIPLMTENGTFIVNGTERVIVSQLHRSPGVFFDHDRGKTHSSGKLLYSARIIPYRGSWLDFEFDPKDALFTRIDRRRKLPVSILLRALGYNNEEMLAEFFEINTFHINPDEGVQLELVPERLRGETLNFDLADGDKVIVEAGKRITARHVKQLEAAGVAALAVPDDYLVGRILSHDVVDGSTGELLANANDEISEDQLAAFRKAGVDAVGTLWVNDLDRGPYLSNTLRIDPTKTQLEALVEIYRMMRPGEPPTKEAAQNLFHNLFFTFERYDLSTVGRMKFNHRVGRKEVLGESVLYDKKYFAERNDEESKRLVAEHADTSDILEVIKVLTEIRNGRGVVDDIDHLGNRRVRSVGEMAENVFRVGLVRVERAVKERLSMAESEGLTPQELINAKPVAAAIKEFFGSSQLSRFMDQNNPLSEVTHKRRVSALGPGGLTRERAGFEVRDVHPTHYGRVCTIETPEGPNIGLINSLAVFARTNQYGFLETPYRKVLDGKVSDDVEYLSAIEENEYVIAQANALTDAKNMLTEQFVPCRFQGESLLKPPAEVHFMDVSPMQTVSVAAALVPFLEHDDANRALMGANMQRQAVPTLRSQKPLVGTGIERAVARDSGVTVNARRGGVIEQIDAARIVVKVNEAEIGGGTDAGVDIYNLIKYTRSNQNTCINQRPLVNVGDVIARGDVLADGPSTDIGELALGQNMLIAFMPWNGYNFEDSILLSERVVEEDRYTTIHIEELTCVARDTKLGPEEISADIPNVSEQALNRLDESGVVYIGAEVRAGDIMVGKVTPKGESQLTPEEKLLRAIFGEKASDVKDSSLRVPPGMDGTVIDVQVFTRDGIEKDKRARQIEESEIKRVKKDFDDQFRILEAAIYARLRSQIVGKVANGGPNLKKGDNVTDAYLDGLKKSDWFQLRMKDDDAADAIERAQKQIQAHEKEFEARFADKRGKITQGDDLAPGVLKMVKVFLAVKRRIQPGDKMAGRHGNKGVVSNVVPVEDMPYMATGEPVDIVLNPLGVPSRMNIGQILEVHLGWAAKGLGRKIQRMLEAQTAVSELRKFLDDIYNHDSAINAERVDLSQFSDEELLNLGKNLIDGVPMATPVFDGASEAEIKRMLELAELPQSGQTQLYDGRTGEAFDRKTTVGYMHYLKLNHLVDDKMHARSTGPYSLVTQQPLGGKAQFGGQRFGEMEVWALEAYGAAYTLQEMLTVKSDDVQGRNQMYKNIVDGEHEMVAGMPESFNVLVKEIRSLAINMELEE.

Belongs to the RNA polymerase beta chain family. The RNAP catalytic core consists of 2 alpha, 1 beta, 1 beta' and 1 omega subunit. When a sigma factor is associated with the core the holoenzyme is formed, which can initiate transcription.

The catalysed reaction is RNA(n) + a ribonucleoside 5'-triphosphate = RNA(n+1) + diphosphate. In terms of biological role, DNA-dependent RNA polymerase catalyzes the transcription of DNA into RNA using the four ribonucleoside triphosphates as substrates. This is DNA-directed RNA polymerase subunit beta from Xanthomonas campestris pv. campestris (strain 8004).